The sequence spans 235 residues: Large ribosomal subunit protein uL1 (235 aa).

The protein belongs to the universal ribosomal protein uL1 family. As to quaternary structure, part of the 50S ribosomal subunit.

Its function is as follows. Binds directly to 23S rRNA. The L1 stalk is quite mobile in the ribosome, and is involved in E site tRNA release. In terms of biological role, protein L1 is also a translational repressor protein, it controls the translation of the L11 operon by binding to its mRNA. This Rhodospirillum centenum (strain ATCC 51521 / SW) protein is Large ribosomal subunit protein uL1.